The following is an 877-amino-acid chain: DNA polymerase I (877 aa).

The 5'-3' exonuclease domain occupies 1–310 (MKKKLVLIDG…FTLADRVTEE (310 aa)). Residues 311-465 (MLADKAALVV…ALERPFLDEL (155 aa)) form the 3'-5' exonuclease domain. Residues 469-877 (EQDRLLVELE…HYGSTWYDAK (409 aa)) are polymerase.

This sequence belongs to the DNA polymerase type-A family. In terms of assembly, single-chain monomer with multiple functions.

It catalyses the reaction DNA(n) + a 2'-deoxyribonucleoside 5'-triphosphate = DNA(n+1) + diphosphate. Its function is as follows. In addition to polymerase activity, this DNA polymerase exhibits 3'-5' and 5'-3' exonuclease activity. This is DNA polymerase I (polA) from Bacillus caldotenax.